The primary structure comprises 878 residues: Phosphoenolpyruvate carboxylase (878 aa).

Catalysis depends on residues H137 and K545.

It belongs to the PEPCase type 1 family. Requires Mg(2+) as cofactor.

It carries out the reaction oxaloacetate + phosphate = phosphoenolpyruvate + hydrogencarbonate. Forms oxaloacetate, a four-carbon dicarboxylic acid source for the tricarboxylic acid cycle. The polypeptide is Phosphoenolpyruvate carboxylase (Serratia proteamaculans (strain 568)).